Consider the following 940-residue polypeptide: MTAEQRRNLHAFGDYVRKTLDPTFILSYMAPWFRDDEVQHIQAEKNNKGPTEAASLFLQFLLELQEEGWFRGFLDALNQAGYCGLCEAIESWDFQKIEKLEEYRSLLRRLQPEFKTTINPKDILPEIAECLISQECEEILQICSSKGLMAGAEKMVECLLRSDKENWPKTLKLALEKEESRFSELWMVDKGAEDVKMKDLEDDEMKTCDVQIFYKEEPENQNLSQNSCSSSAPHTYSPLKPRKYQLELALPAQNGKNTIICAPTGCGKTFVSLLICEHHLKKFPRGRKGKVVFFAIQLPVYEQQKSVFSKHFERLGYKVAGISGATSDTVCVEQIVENSDIIILTPQILVNCLTNGTIPSLSVFTLMIFDECHNTSKQHPYNVIMFSYLDRKLGGSSDSLPQVIGLTASVGVGDAKNKAEATEYICKLCASLDTSVIATVRDNLEELEEVVYKPQKFFRKVELRTTDRFKCIISQLMMEIESLAKSIFEELGTITLGGLFQIQNSNFGTQKYEQWIVKVQKECAVFQMPDKDKESRICKALFSYMSHLRIYNDALIINEHARMKDALDYLKDFFRNIRAAGFDEIEQDLTQRFEEKLQELESISIDPSNENPKLRDLCFILQEEYHLNPETRTILFVKTRALVDALKKWIKENPKLSFLKPSILTGRGKTNQNIGMTLPAQKCVLDTFRTDKDNKILITTSVADEGIDIAQCNLVILYEYVGNVIKMIQTRGRGRARGSKCFLLTANADLIDKEKMNMYKEEMMNGAILILQTWDEAVFKEKIHQIQIREKIIRDNQGKPEPVPDKKTKKLLCKKCKAFACYTADIRMVEKCHFTVVGDAFRERFVSKLHPKPKSFGNIEKRAKIYCARPDCSHDWGIYVRYKAFEMPFIKIESFVVEDIATGVQTVHAKWKDFNFEKLSFDAAEMAGGAQDLGLQGMGN.

CARD domains are found at residues 1–87 (MTAE…GLCE) and 92–172 (WDFQ…KTLK). Residues K48, K96, K154, K164, K172, and K190 each participate in a glycyl lysine isopeptide (Lys-Gly) (interchain with G-Cter in ubiquitin) cross-link. The segment at 219 to 928 (ENQNLSQNSC…LSFDAAEMAG (710 aa)) is interaction with ZC3HAV1. Residues 249-428 (ALPAQNGKNT…AEATEYICKL (180 aa)) form the Helicase ATP-binding domain. Residue 262 to 269 (APTGCGKT) participates in ATP binding. The DECH box motif lies at 370–373 (DECH). In terms of domain architecture, Helicase C-terminal spans 613 to 779 (KLRDLCFILQ…ILQTWDEAVF (167 aa)). Residues 738–928 (GSKCFLLTAN…LSFDAAEMAG (191 aa)) form a mediates interaction with RNF135 region. T773 bears the Phosphothreonine; by CK2 mark. The 134-residue stretch at 795 to 928 (DNQGKPEPVP…LSFDAAEMAG (134 aa)) folds into the RLR CTR domain. C813 is a Zn(2+) binding site. Residue K815 forms a Glycyl lysine isopeptide (Lys-Gly) (interchain with G-Cter in ubiquitin) linkage. C816 is a binding site for Zn(2+). At K861 the chain carries N6-acetyllysine. 2 residues coordinate Zn(2+): C867 and C872. K912 is modified (N6-acetyllysine).

This sequence belongs to the helicase family. RLR subfamily. Monomer; maintained as a monomer in an autoinhibited state. Upon binding of viral RNAs and conformational shift, homooligomerizes and forms filaments on these molecules. Interacts (via tandem CARD domain) with MAVS/IPS1 promoting its filamentation. Interacts with DHX58/LGP2, IKBKE, TBK1 and STING1. Interacts (via CARD domain) with TRIM25 (via SPRY domain). Interacts (double-stranded RNA-bound oligomeric form) with RNF135 (homodimer); involved in RNA length-dependent activation of the RIG-I signaling pathway. Interacts with CYLD. Interacts with NLRC5; blocks the interaction of MAVS/IPS1 to RIGI. Interacts with SRC. Interacts with DDX60. Interacts with ZC3HAV1 (via zinc-fingers) in an RNA-dependent manner. Interacts (via tandem CARD domain) with SEC14L1; the interaction is direct and impairs the interaction of RIGI with MAVS/IPS1. Interacts with VCP/p97; interaction is direct and allows the recruitment of RNF125 and subsequent ubiquitination and degradation. Interacts with NOP53; may regulate RIGI through USP15-mediated 'Lys-63'-linked deubiquitination. Interacts with SIGLEC10, CBL and PTPN11; within a negative feedback loop leading to RIGI degradation. Interacts with LRRC25. Interacts with ZCCHC3; leading to activation of RIGI. Interacts with RNF123. Interacts with UBE2D3 and UBE2N; E2 ubiquitin ligases involved in RNF135-mediated ubiquitination of RIGI and activation of the RIG-I signaling pathway. Interacts with IFIT3. Interacts with DDX3X. Interacts with RTN3. Interacts with ARL16; this interaction is GTP-dependent and induced upon viral infection; this interaction suppresses the RNA sensing activity of RIGI. Interacts with DHX16; this interaction enhances RIGI-mediated antiviral response. Interacts with IRGM; promoting RIGI degradation. Interacts with IFI6; this interaction inhibits RIGI activation. Interacts with ECSIT; this interaction bridges RIGI to the MAVS complex at the mitochondrion. Interacts with YWHAE; this interaction drives RIGI at the mitochondrion. Post-translationally, phosphorylated in resting cells and dephosphorylated in RNA virus-infected cells. Phosphorylation at Thr-773 results in inhibition of its activity while dephosphorylation at these sites results in its activation. In terms of processing, ISGylated. Conjugated to ubiquitin-like protein ISG15 upon IFN-beta stimulation. ISGylation negatively regulates its function in antiviral signaling response. Sumoylated, probably by MUL1; inhibiting its polyubiquitination. Post-translationally, acetylated in response to RNA virus infection. Deacetylated by HDAC6 in the presence of viral mRNAs which is required for detection of viral RNA by RIGI. In terms of processing, ubiquitinated. 'Lys-63' ubiquitination by RNF135, which occurs after RNA-binding and homodimerization, releases the autoinhibition of the CARD domains by the RLR CTR domain, an essential step in the activation of the RIG-I signaling pathway. Also ubiquitinated by TRIM4. Also undergoes 'Lys-48' ubiquitination by RNF125 that leads to proteasomal degradation. 'Lys-48' ubiquitination follows viral infection and is enhanced by 'Lys-63'-linked ubiquitination of the CARD domains that promotes interaction with VCP/p97 and subsequent recruitment of RNF125. Within a negative feedback loop involving SIGLEC10 and PTPN11, 'Lys-48' ubiquitination at Lys-815 by CBL also elicits the proteasomal degradation of RIGI. Deubiquitinated by CYLD, a protease that selectively cleaves 'Lys-63'-linked ubiquitin chains. Also probably deubiquitinated by USP17L2/USP17 that cleaves 'Lys-48'- and 'Lys-63'-linked ubiquitin chains and positively regulates the receptor. Ubiquitinated by TRIM40 via 'Lys-48'-linked ubiquitination; leading to proteasomal degradation. Deubiquitinated by USP27X that cleaves 'Lys-63'-linked ubiquitin chains and inhibits the innate immune receptor activity. Deubiquitinated by USP3 that also cleaves 'Lys-63'-linked ubiquitin chains and inhibits the innate immune receptor activity. Degraded via selective autophagy following interaction with IRGM. IRGM promotes RIGI recruitment to autophagosome membranes, promoting its SQSTM1/p62-dependent autophagic degradation. In terms of tissue distribution, ubiquitously expressed, with highest levels in spleen, liver, intestine and heart. Up-regulated in tracheobronchial lymph node and tonsils during porcine reproductive and respiratory syndrome virus (PRRSV) infection.

It localises to the cytoplasm. The protein resides in the cell projection. It is found in the ruffle membrane. The protein localises to the cytoskeleton. Its subcellular location is the cell junction. It localises to the tight junction. The catalysed reaction is ATP + H2O = ADP + phosphate + H(+). Its function is as follows. Innate immune receptor that senses cytoplasmic viral nucleic acids and activates a downstream signaling cascade leading to the production of type I interferons and pro-inflammatory cytokines. Forms a ribonucleoprotein complex with viral RNAs on which it homooligomerizes to form filaments. The homooligomerization allows the recruitment of RNF135 an E3 ubiquitin-protein ligase that activates and amplifies the RIG-I-mediated antiviral signaling in an RNA length-dependent manner through ubiquitination-dependent and -independent mechanisms. Upon activation, associates with mitochondria antiviral signaling protein (MAVS/IPS1) that activates the IKK-related kinases TBK1 and IKBKE which in turn phosphorylate the interferon regulatory factors IRF3 and IRF7, activating transcription of antiviral immunological genes including the IFN-alpha and IFN-beta interferons. Ligands include: 5'-triphosphorylated ssRNA and dsRNA and short dsRNA (&lt;1 kb in length). In addition to the 5'-triphosphate moiety, blunt-end base pairing at the 5'-end of the RNA is very essential. Overhangs at the non-triphosphorylated end of the dsRNA RNA have no major impact on its activity. A 3'overhang at the 5'triphosphate end decreases and any 5'overhang at the 5' triphosphate end abolishes its activity. Detects both positive and negative strand RNA viruses including members of the families Paramyxoviridae, Rhabdoviridae: vesicular stomatitis virus (VSV) Orthomyxoviridae: influenza A and B virus, Flaviviridae: Japanese encephalitis virus (JEV). It also detects rotavirus and reovirus. Also involved in antiviral signaling in response to viruses containing a dsDNA genome. Detects dsRNA produced from non-self dsDNA by RNA polymerase III. May play important roles in granulocyte production and differentiation, bacterial phagocytosis and in the regulation of cell migration. This is Antiviral innate immune response receptor RIG-I from Sus scrofa (Pig).